We begin with the raw amino-acid sequence, 796 residues long: Armadillo repeat-containing protein wrm-1 (796 aa).

The disordered stretch occupies residues 17 to 59; that stretch reads NFNPMTPSTSRVSTPVRPSSTMSARQYSGSPFKAQPQNMEPSN. The stretch at 462 to 504 is one ARM repeat; sequence ESIHCIVQLIGCSDVTIVELATGTLRNIGLHNKMNKAFMVQDG.

Interacts (independently of ARM repeat) with nhr-25. Component of the beta-catenin-lit-1 complex (also called the lit-1/wrm-1 complex or the wrm-1/lit-1 kinase complex) at least composed of lit-1 and wrm-1. Interacts (via N-terminus) with lit-1; the interaction is direct and activates lit-1 kinase activity which leads to the phosphorylation of pop-1. This promotes pop-1 interaction with par-5 and translocation of pop-1 from the nucleus to the cytoplasm.

Its subcellular location is the cytoplasm. The protein localises to the cell cortex. It is found in the nucleus. Antagonistic role in the Wnt signaling pathway that operates in embryogenesis. When located at the cortex it has been shown to inhibit Wnt signaling during asymmetric cell division but when relocated to the nucleus it shows positive regulation. Has a role in blastomere signaling during endoderm specification. Component of the beta-catenin-lit-1 complex which promotes phosphorylation, down-regulation and subcellular relocation of pop-1. Within the complex, activates lit-1-dependent kinase activity. Can substitute for bar-1 indicating functional redundancy. Appears to have a role in centrosome positioning and can activation transcription in yeast. Involved in the development of distal tip cells (DTC) by regulating the asymmetric distribution of cye-1 and cki-1 between the daughters of Z1.a and Z4.p cells. This Caenorhabditis elegans protein is Armadillo repeat-containing protein wrm-1.